Consider the following 307-residue polypeptide: Elongation factor Ts (307 aa).

The involved in Mg(2+) ion dislocation from EF-Tu stretch occupies residues 80–83 (TDFV).

Belongs to the EF-Ts family.

The protein resides in the cytoplasm. In terms of biological role, associates with the EF-Tu.GDP complex and induces the exchange of GDP to GTP. It remains bound to the aminoacyl-tRNA.EF-Tu.GTP complex up to the GTP hydrolysis stage on the ribosome. This Methylobacterium sp. (strain 4-46) protein is Elongation factor Ts.